The chain runs to 611 residues: Menin (611 aa).

The interval 214 to 390 is interaction with FANCD2; that stretch reads GVAERSWLYL…SLLETGEERT (177 aa). The tract at residues 460 to 553 is disordered; sequence REAEAAEAEE…SPPPEGPVLT (94 aa). Residues 484 to 500 are compositionally biased toward basic and acidic residues; that stretch reads RRESKPEEPPPPKKPAL. 2 positions are modified to phosphoserine: S487 and S544. The residue at position 595 (T595) is a Phosphothreonine.

In terms of assembly, component of the MLL-HCF complex, at least composed of KMT2A/MLL1, MEN1, ASH2L, RBBP5, DPY30, WDR5, HCFC1 and HCFC2. Component of the menin-associated histone methyltransferase complex, at least composed of KMT2B/MLL4, MEN1, ASH2L, RBBP5, DPY30 and WDR5. Interacts with POLR2B. Interacts with POLR2A phosphorylated at 'Ser-5', but not with the unphosphorylated, nor 'Ser-2' phosphorylated POLR2A forms. Interacts with FANCD2 and DBF4. Interacts with SMAD3, but not with SMAD2, nor SMAD4. Directly interacts with NFKB1, NFKB2 and RELA. Interacts with JUND (via MBM motif); inhibits the interaction of JUND with MAPK10 and the phosphorylation of JUND by MAP kinases MAPK8 and MAPK10. Interacts with KMT2A (via MBM motif). The KMT2A-MEN1 complex interacts with PSIP1 with a greater affinity as MEN1 enhances interaction of KMT2A with PSIP1. As to expression, widely expressed, with high levels in hippocampus, cerebral cortex, testis and thymus (at protein level). Also expressed at high levels in pancreatic islets, ovary and bone marrow. In the brain, highest expression in hippocampus pyramidal nerve cells (at protein level). In the testis, may be expressed in spermatogonia (at protein level). Low expression, if any, in skeletal muscle.

It localises to the nucleus. Its function is as follows. Essential component of a MLL/SET1 histone methyltransferase (HMT) complex, a complex that specifically methylates 'Lys-4' of histone H3 (H3K4). Functions as a transcriptional regulator. Binds to the TERT promoter and represses telomerase expression. Plays a role in TGFB1-mediated inhibition of cell-proliferation, possibly regulating SMAD3 transcriptional activity. Represses JUND-mediated transcriptional activation on AP1 sites, as well as that mediated by NFKB subunit RELA. Positively regulates HOXC8 and HOXC6 gene expression. May be involved in normal hematopoiesis through the activation of HOXA9 expression. May be involved in DNA repair. The protein is Menin (Men1) of Mus musculus (Mouse).